We begin with the raw amino-acid sequence, 95 residues long: Aspartyl/glutamyl-tRNA(Asn/Gln) amidotransferase subunit C (95 aa).

The protein belongs to the GatC family. As to quaternary structure, heterotrimer of A, B and C subunits.

The enzyme catalyses L-glutamyl-tRNA(Gln) + L-glutamine + ATP + H2O = L-glutaminyl-tRNA(Gln) + L-glutamate + ADP + phosphate + H(+). It carries out the reaction L-aspartyl-tRNA(Asn) + L-glutamine + ATP + H2O = L-asparaginyl-tRNA(Asn) + L-glutamate + ADP + phosphate + 2 H(+). Functionally, allows the formation of correctly charged Asn-tRNA(Asn) or Gln-tRNA(Gln) through the transamidation of misacylated Asp-tRNA(Asn) or Glu-tRNA(Gln) in organisms which lack either or both of asparaginyl-tRNA or glutaminyl-tRNA synthetases. The reaction takes place in the presence of glutamine and ATP through an activated phospho-Asp-tRNA(Asn) or phospho-Glu-tRNA(Gln). The polypeptide is Aspartyl/glutamyl-tRNA(Asn/Gln) amidotransferase subunit C (Prochlorococcus marinus (strain NATL1A)).